A 421-amino-acid chain; its full sequence is E3 ubiquitin protein ligase DRIP1 (421 aa).

An RING-type zinc finger spans residues 16–57; it reads CSICDNILRDATTISECLHTFCRKCIYEKITEDEIETCPVCN. Composition is skewed to polar residues over residues 106–121 and 157–172; these read ISSL…AQAG and ESTS…TQNK. 2 disordered regions span residues 106 to 198 and 216 to 307; these read ISSL…WDSK and PLKS…QERR. The span at 178-198 shows a compositional bias: basic and acidic residues; that stretch reads SCKESISNKENKDGDEPWDSK. Positions 218–227 are enriched in low complexity; sequence KSSASQGSGS. Basic residues predominate over residues 244-253; that stretch reads TKTKNKKRKC. A compositionally biased stretch (polar residues) spans 262–271; sequence NGDPTTSETV. Residues 274-284 show a composition bias toward basic residues; the sequence is KRMRTTQRKRS. Polar residues predominate over residues 285–294; that stretch reads ATTLGDSRNL.

In terms of assembly, interacts with DREB2A. Autoubiquitinated. As to expression, expressed in roots, leaves and flowers.

It is found in the nucleus. The catalysed reaction is S-ubiquitinyl-[E2 ubiquitin-conjugating enzyme]-L-cysteine + [acceptor protein]-L-lysine = [E2 ubiquitin-conjugating enzyme]-L-cysteine + N(6)-ubiquitinyl-[acceptor protein]-L-lysine.. It functions in the pathway protein modification; protein ubiquitination. In terms of biological role, E3 ubiquitin-protein ligase that acts as a negative regulator of the response to water stress. Mediates ubiquitination and subsequent proteasomal degradation of the drought-induced transcriptional activator DREB2A. Functionally redundant with DRIP2. The sequence is that of E3 ubiquitin protein ligase DRIP1 (DRIP1) from Arabidopsis thaliana (Mouse-ear cress).